We begin with the raw amino-acid sequence, 440 residues long: Trigger factor (440 aa).

The 86-residue stretch at 163–248 (GEIVSVTFEA…VHVIKERTLP (86 aa)) folds into the PPIase FKBP-type domain.

The protein belongs to the FKBP-type PPIase family. Tig subfamily.

Its subcellular location is the cytoplasm. It carries out the reaction [protein]-peptidylproline (omega=180) = [protein]-peptidylproline (omega=0). In terms of biological role, involved in protein export. Acts as a chaperone by maintaining the newly synthesized protein in an open conformation. Functions as a peptidyl-prolyl cis-trans isomerase. The polypeptide is Trigger factor (Solidesulfovibrio magneticus (strain ATCC 700980 / DSM 13731 / RS-1) (Desulfovibrio magneticus)).